The chain runs to 173 residues: NADH-quinone oxidoreductase subunit B (173 aa).

[4Fe-4S] cluster contacts are provided by cysteine 46, cysteine 47, cysteine 112, and cysteine 142.

Belongs to the complex I 20 kDa subunit family. As to quaternary structure, NDH-1 is composed of 14 different subunits. Subunits NuoB, C, D, E, F, and G constitute the peripheral sector of the complex. Requires [4Fe-4S] cluster as cofactor.

It localises to the cell membrane. The catalysed reaction is a quinone + NADH + 5 H(+)(in) = a quinol + NAD(+) + 4 H(+)(out). In terms of biological role, NDH-1 shuttles electrons from NADH, via FMN and iron-sulfur (Fe-S) centers, to quinones in the respiratory chain. The immediate electron acceptor for the enzyme in this species is believed to be a menaquinone. Couples the redox reaction to proton translocation (for every two electrons transferred, four hydrogen ions are translocated across the cytoplasmic membrane), and thus conserves the redox energy in a proton gradient. This Desulfitobacterium hafniense (strain DSM 10664 / DCB-2) protein is NADH-quinone oxidoreductase subunit B.